We begin with the raw amino-acid sequence, 52 residues long: Histone H2A (52 aa).

The tract at residues 1–25 (MSGRGKTGGKARAKAKTRSSRAGLQ) is disordered. S2 is modified (N-acetylserine). S2 is modified (phosphoserine). K6 bears the N6-(2-hydroxyisobutyryl)lysine mark. An N6-acetyllysine modification is found at K6. Residues 7–19 (TGGKARAKAKTRS) are compositionally biased toward basic residues. K10 is modified (N6-(2-hydroxyisobutyryl)lysine; alternate). N6-lactoyllysine; alternate is present on K10. K10 bears the N6-succinyllysine mark. Residues K14 and K16 each participate in a glycyl lysine isopeptide (Lys-Gly) (interchain with G-Cter in ubiquitin) cross-link. K37 is subject to N6-(2-hydroxyisobutyryl)lysine; alternate.

As to quaternary structure, the nucleosome is a histone octamer containing two molecules each of H2A, H2B, H3 and H4 assembled in one H3-H4 heterotetramer and two H2A-H2B heterodimers. The octamer wraps approximately 147 bp of DNA. In terms of processing, acetylation is not necessary for the antibacterial activity. Monoubiquitination in C-terminus gives a specific tag for epigenetic transcriptional repression. Following DNA double-strand breaks (DSBs), it is ubiquitinated through 'Lys-63' linkage of ubiquitin moieties, leading to the recruitment of repair proteins to sites of DNA damage. H2AK119Ub and ionizing radiation-induced 'Lys-63'-linked ubiquitination are distinct events. Post-translationally, phosphorylation on Ser-2 is enhanced during mitosis. Phosphorylation on Ser-2 directly represses transcription.

It localises to the nucleus. The protein resides in the chromosome. The protein localises to the secreted. Core component of nucleosome. Nucleosomes wrap and compact DNA into chromatin, limiting DNA accessibility to the cellular machineries which require DNA as a template. Histones thereby play a central role in transcription regulation, DNA repair, DNA replication and chromosomal stability. DNA accessibility is regulated via a complex set of post-translational modifications of histones, also called histone code, and nucleosome remodeling. Its function is as follows. Hipposin shows strong antimicrobial activity against several Gram-positive and Gram-negative bacteria. This Hippoglossus hippoglossus (Atlantic halibut) protein is Histone H2A.